The sequence spans 378 residues: TelA-like protein SAV1406 (378 aa).

It belongs to the TelA family.

In Staphylococcus aureus (strain Mu50 / ATCC 700699), this protein is TelA-like protein SAV1406.